We begin with the raw amino-acid sequence, 154 residues long: Small ribosomal subunit protein bS6 (154 aa).

The tract at residues 107 to 154 (KSDDRERGFRGPKPPGRFESGRKRGYDDREEFRARAGGDDDDRGLDQE) is disordered. Residues 125–154 (ESGRKRGYDDREEFRARAGGDDDDRGLDQE) show a composition bias toward basic and acidic residues.

It belongs to the bacterial ribosomal protein bS6 family.

Binds together with bS18 to 16S ribosomal RNA. The sequence is that of Small ribosomal subunit protein bS6 from Granulibacter bethesdensis (strain ATCC BAA-1260 / CGDNIH1).